We begin with the raw amino-acid sequence, 301 residues long: Acetylglutamate kinase (301 aa).

Substrate is bound by residues 68–69, R90, and N195; that span reads GG.

It belongs to the acetylglutamate kinase family. ArgB subfamily.

Its subcellular location is the cytoplasm. It carries out the reaction N-acetyl-L-glutamate + ATP = N-acetyl-L-glutamyl 5-phosphate + ADP. Its pathway is amino-acid biosynthesis; L-arginine biosynthesis; N(2)-acetyl-L-ornithine from L-glutamate: step 2/4. In terms of biological role, catalyzes the ATP-dependent phosphorylation of N-acetyl-L-glutamate. The protein is Acetylglutamate kinase of Pseudomonas savastanoi pv. phaseolicola (strain 1448A / Race 6) (Pseudomonas syringae pv. phaseolicola (strain 1448A / Race 6)).